The following is a 127-amino-acid chain: Cyclin-dependent kinase 2-associated protein 2 (127 aa).

The interval 1–49 (MSYKPIAPAPSSTPGSSTPGPGTPVPTAGSVPSPSGSVPGAAGPFRPLF) is disordered. The segment covering 9 to 44 (APSSTPGSSTPGPGTPVPTAGSVPSPSGSVPGAAGP) has biased composition (low complexity). Residues 65 to 107 (PPGAQGSQSTYTDLLSVIEEMGKEIRPTYAGSKSAMERLKRGI) are interaction with CDK2.

The protein belongs to the CDK2AP family. In terms of assembly, component of the nucleosome remodeling and deacetylase (NuRD) repressor complex, composed of core proteins MTA1, MTA2, MTA3, RBBP4, RBBP7, HDAC1, HDAC2, MBD2, MBD3, and peripherally associated proteins CDK2AP1, CDK2AP2, GATAD2A, GATAD2B, CHD3, CHD4 and CHD5. The exact stoichiometry of the NuRD complex is unknown, and some subunits such as MBD2 and MBD3, GATAD2A and GATAD2B, and CHD3, CHD4 and CHD5 define mutually exclusive NuRD complexes. Interacts with CDK2AP1. Interacts with CDK2. Interacts with MAPK1. In terms of processing, phosphorylated by MAPK1 and CDK2.

It is found in the cytoplasm. Its subcellular location is the nucleus. Acts as a component of the histone deacetylase NuRD complex which participates in the remodeling of chromatin. Inhibits cell cycle G1/S phase transition by repressing CDK2 expression and activation; represses CDK2 activation by inhibiting its interaction with cyclin E and A. Plays a role in regulating the self-renewal of embryonic stem cells (ESCs) and in maintaining cell survival during terminal differentiation of ESCs. Regulates microtubule organization of metaphase II oocytes. In Bos taurus (Bovine), this protein is Cyclin-dependent kinase 2-associated protein 2 (CDK2AP2).